The following is a 216-amino-acid chain: MATLTTRQQQIYDLIHQTIQRTGFPPTRAEIAAEFGFSSPNAAEEHLRALARKGVIELTPGASRGIRLRAEGGASPHQFSLPSMGLMQLTLPLVGRVAAGSPILAAEHIDRQYQVDPSLFSSRPDFLLKVRGMSMRDAGILDGDLLAVQRAAEAANGKIVVARLGDDVTVKRFQRKGRQVELIAENPDFEPIHVDLDRDEFQLEGLAVGLIRPAAP.

Positions 28 to 48 (RAEIAAEFGFSSPNAAEEHLR) form a DNA-binding region, H-T-H motif. Active-site for autocatalytic cleavage activity residues include Ser134 and Lys171.

This sequence belongs to the peptidase S24 family. Homodimer.

The catalysed reaction is Hydrolysis of Ala-|-Gly bond in repressor LexA.. Functionally, represses a number of genes involved in the response to DNA damage (SOS response), including recA and lexA. In the presence of single-stranded DNA, RecA interacts with LexA causing an autocatalytic cleavage which disrupts the DNA-binding part of LexA, leading to derepression of the SOS regulon and eventually DNA repair. This is LexA repressor from Ralstonia nicotianae (strain ATCC BAA-1114 / GMI1000) (Ralstonia solanacearum).